The following is a 361-amino-acid chain: Glutaminyl-peptide cyclotransferase (361 aa).

An N-terminal signal peptide occupies residues 1–28; the sequence is MAGGRHRRVVGTLHLLLLVAALPWASRG. Asn49 carries an N-linked (GlcNAc...) asparagine glycan. Cysteines 139 and 164 form a disulfide. Asp159 contributes to the Zn(2+) binding site. Glu201 serves as the catalytic Proton acceptor. A Zn(2+)-binding site is contributed by Glu202. Asp248 serves as the catalytic Proton acceptor. Residue Asn296 is glycosylated (N-linked (GlcNAc...) asparagine). His330 contacts Zn(2+).

It belongs to the glutaminyl-peptide cyclotransferase family.

Its subcellular location is the secreted. It catalyses the reaction N-terminal L-glutaminyl-[peptide] = N-terminal 5-oxo-L-prolyl-[peptide] + NH4(+). Responsible for the biosynthesis of pyroglutamyl peptides. Has a bias against acidic and tryptophan residues adjacent to the N-terminal glutaminyl residue and a lack of importance of chain length after the second residue. Also catalyzes N-terminal pyroglutamate formation. In vitro, catalyzes pyroglutamate formation of N-terminally truncated form of APP amyloid-beta peptides [Glu-3]-amyloid-beta. May be involved in the N-terminal pyroglutamate formation of several amyloid-related plaque-forming peptides. The chain is Glutaminyl-peptide cyclotransferase (QPCT) from Homo sapiens (Human).